The following is a 374-amino-acid chain: LRR repeats and ubiquitin-like domain-containing protein At2g30105 (374 aa).

A Ubiquitin-like domain is found at 13-87; it reads IKLTVKFGGK…LMLMASQGLH (75 aa). LRR repeat units lie at residues 128–151, 152–175, 177–200, 201–224, 225–248, 250–270, 272–293, 294–316, and 318–340; these read WKATGVIALAQANLKEIPEEVWDC, GSGVRVLDISENFIKEVPAKISSF, SMQKLFLQGNGLSDESIQWEGIAS, LKRLMLLSISHNNLTVLPSAMGSL, TSLRQLDVTNNKLTSLPNELGLLT, LEILKANNNRITSLPESIGNC, FLMEVDLSANIISELPETFTKL, RNLKTLELNNTGLKTLPSALFKM, and LQLSTLGLHNTEITVEFLRQFEG.

The sequence is that of LRR repeats and ubiquitin-like domain-containing protein At2g30105 from Arabidopsis thaliana (Mouse-ear cress).